Consider the following 373-residue polypeptide: GDP-mannose 4,6 dehydratase 2 (373 aa).

Residues 1–15 are compositionally biased toward polar residues; the sequence is MASENNGSRSDSESI. Residues 1-21 form a disordered region; sequence MASENNGSRSDSESITAPKAD. NADP(+)-binding positions include 35 to 40, arginine 60, 91 to 92, 113 to 117, and tyrosine 128; these read GITGQD, DL, and LAAQS. Position 117 (serine 117) interacts with substrate. Residue serine 162 coordinates substrate. Serine 162 is a catalytic residue. Active-site nucleophile residues include glutamate 164 and tyrosine 185. Tyrosine 185 contacts substrate. Lysine 189 provides a ligand contact to NADP(+). Position 214 (asparagine 214) interacts with substrate. Positions 215 and 220 each coordinate NADP(+). Substrate contacts are provided by residues 220–228, glycine 247, arginine 253, and 314–317; these read RGENFVTRK and RPAE.

Belongs to the NAD(P)-dependent epimerase/dehydratase family. GDP-mannose 4,6-dehydratase subfamily. In terms of assembly, homotetramer. Binds to GER1. It depends on NADP(+) as a cofactor. Expressed in roots, flowers, siliques, leaves and stems. Not expressed in the root meristem and the proximal part of the elongation zone, or in emerging lateral roots. Expressed in trichomes and guard cells, and in pollen just before anthesis.

The enzyme catalyses GDP-alpha-D-mannose = GDP-4-dehydro-alpha-D-rhamnose + H2O. The protein operates within nucleotide-sugar biosynthesis; GDP-L-fucose biosynthesis via de novo pathway; GDP-L-fucose from GDP-alpha-D-mannose: step 1/2. In terms of biological role, catalyzes the conversion of GDP-D-mannose to GDP-4-dehydro-6-deoxy-D-mannose. The protein is GDP-mannose 4,6 dehydratase 2 (MUR1) of Arabidopsis thaliana (Mouse-ear cress).